Reading from the N-terminus, the 349-residue chain is UPF0283 membrane protein Ent638_2153 (349 aa).

The next 3 membrane-spanning stretches (helical) occupy residues 70–90 (MVTA…VQWT), 99–119 (WVAL…VGSV), and 213–233 (ESTL…FIAW).

It belongs to the UPF0283 family.

The protein resides in the cell inner membrane. In Enterobacter sp. (strain 638), this protein is UPF0283 membrane protein Ent638_2153.